The chain runs to 322 residues: Deoxyhypusine hydroxylase (322 aa).

HEAT-like PBS-type repeat units lie at residues Leu-76–Asp-102, Val-109–Glu-135, Phe-234–Arg-260, and Val-267–Asp-293. Fe cation is bound by residues His-78, Glu-79, His-111, Glu-112, His-236, Glu-237, His-269, and Glu-270.

The protein belongs to the deoxyhypusine hydroxylase family. Requires Fe(2+) as cofactor.

The protein resides in the cytoplasm. It localises to the nucleus. The catalysed reaction is [eIF5A protein]-deoxyhypusine + AH2 + O2 = [eIF5A protein]-hypusine + A + H2O. It participates in protein modification; eIF5A hypusination. In terms of biological role, catalyzes the hydroxylation of the N(6)-(4-aminobutyl)-L-lysine intermediate to form hypusine, an essential post-translational modification only found in mature eIF-5A factor. This Eremothecium gossypii (strain ATCC 10895 / CBS 109.51 / FGSC 9923 / NRRL Y-1056) (Yeast) protein is Deoxyhypusine hydroxylase.